Reading from the N-terminus, the 262-residue chain is Shikimate dehydrogenase (NADP(+)) (262 aa).

Shikimate is bound by residues 15–17 (SRS) and T62. K66 functions as the Proton acceptor in the catalytic mechanism. E78 contacts NADP(+). 2 residues coordinate shikimate: N87 and D102. NADP(+) is bound by residues 126–130 (GAGGA), 150–155 (NRTLAR), and M214. Y216 contacts shikimate. NADP(+) is bound at residue G236.

This sequence belongs to the shikimate dehydrogenase family. In terms of assembly, homodimer.

It catalyses the reaction shikimate + NADP(+) = 3-dehydroshikimate + NADPH + H(+). It participates in metabolic intermediate biosynthesis; chorismate biosynthesis; chorismate from D-erythrose 4-phosphate and phosphoenolpyruvate: step 4/7. Its function is as follows. Involved in the biosynthesis of the chorismate, which leads to the biosynthesis of aromatic amino acids. Catalyzes the reversible NADPH linked reduction of 3-dehydroshikimate (DHSA) to yield shikimate (SA). This is Shikimate dehydrogenase (NADP(+)) from Acinetobacter baumannii (strain AB307-0294).